A 381-amino-acid chain; its full sequence is 3-dehydroquinate synthase (381 aa).

NAD(+) contacts are provided by residues 81 to 86 (EGESSK), 115 to 119 (GVIGD), 139 to 140 (TS), K152, and K161. The Zn(2+) site is built by E194, H256, and H274.

Belongs to the sugar phosphate cyclases superfamily. Dehydroquinate synthase family. Requires Co(2+) as cofactor. The cofactor is Zn(2+). NAD(+) serves as cofactor.

The protein localises to the cytoplasm. It catalyses the reaction 7-phospho-2-dehydro-3-deoxy-D-arabino-heptonate = 3-dehydroquinate + phosphate. Its pathway is metabolic intermediate biosynthesis; chorismate biosynthesis; chorismate from D-erythrose 4-phosphate and phosphoenolpyruvate: step 2/7. Its function is as follows. Catalyzes the conversion of 3-deoxy-D-arabino-heptulosonate 7-phosphate (DAHP) to dehydroquinate (DHQ). The protein is 3-dehydroquinate synthase of Rhodopseudomonas palustris (strain ATCC BAA-98 / CGA009).